The chain runs to 452 residues: Exodeoxyribonuclease 7 large subunit (452 aa).

Belongs to the XseA family. Heterooligomer composed of large and small subunits.

Its subcellular location is the cytoplasm. It catalyses the reaction Exonucleolytic cleavage in either 5'- to 3'- or 3'- to 5'-direction to yield nucleoside 5'-phosphates.. Its function is as follows. Bidirectionally degrades single-stranded DNA into large acid-insoluble oligonucleotides, which are then degraded further into small acid-soluble oligonucleotides. The protein is Exodeoxyribonuclease 7 large subunit of Bacillus cereus (strain ATCC 10987 / NRS 248).